The following is a 227-amino-acid chain: tRNA pseudouridine synthase B (227 aa).

Aspartate 42 acts as the Nucleophile in catalysis.

This sequence belongs to the pseudouridine synthase TruB family. Type 1 subfamily.

It carries out the reaction uridine(55) in tRNA = pseudouridine(55) in tRNA. Its function is as follows. Responsible for synthesis of pseudouridine from uracil-55 in the psi GC loop of transfer RNAs. The polypeptide is tRNA pseudouridine synthase B (Ureaplasma parvum serovar 3 (strain ATCC 27815 / 27 / NCTC 11736)).